A 197-amino-acid polypeptide reads, in one-letter code: Ribosome maturation factor RimP (197 aa).

The protein belongs to the RimP family.

Its subcellular location is the cytoplasm. Required for maturation of 30S ribosomal subunits. This Acidovorax ebreus (strain TPSY) (Diaphorobacter sp. (strain TPSY)) protein is Ribosome maturation factor RimP.